Reading from the N-terminus, the 1921-residue chain is MSSFIPLNALEDYSLSSAEEHTRELQIEEGLKIFQKALHAQRQGKLDEAFDLYDALFKIDVIHLDIDDNNLSPTVGRLKYLAYKNHGILLLEHLAHNLDDLTTTEIRDQLQDILVQFADALLVDDSDDSFLKLFSDLARIIGLKRLSRFALECIVSSPSRVFTFSESLLNHDFLNPEEVAILQEVVLLAKQLQDYVSMDSPMYDLMASQVADVAPAKKPKYISWIEPTQFKAPPLKDLKETWRGSELVVEIGVPSWRGICKGLHDSLHRLTKRKKVLNGVTIRDPYLQIGVEISSVHGKLVDEEDLEDPEDDVEMMDIIDKPAEETIEVKTEEALDSTVKVEEIPAEINIGEVENKSSTEENKKQESPENGDKKEASGNGNGSAGPPVKDTTVKTEDRDSLTVALAIKRPAEGTTSSSQPPSKRTRGRGADEPAELEKQVDPGFFNNITSFVGSLDLKFPFVDLNQLDNEEQFYQDFKAVISNWGEQGSELFLKLSSAPESNLSVPVTQILDSAAQVDDDYGAPCNVLSISPDKFLEQMSESCSLSDFRFKIIEALLGNSSLVNEIWPSELIASVQIILNHLEPQILRDVRQMFFDGQTHSDSLIKQQLYVAEARYELVANEIIADKQRITENTSKLTKSALRDREWHKKTLHQRLLAWESCVITLLSMCKTRQLSVTELELRHTWVRLSLSQCDEAEISRMRQNYEEFQVQLLDEAPDLMVRFVNFPHIQTLSLDSVNGQISKLKVASTFAKIFSPDADEDIGTRIAMLESILKGSSDTSGDRESLSAREFLQHASIDFKHKLWYLLLDAYNESGEKRISVDGYIEMLTSLSYELETAGYRNMNPNQRHTILLRTLSTMNDTVGNLAKICRDTPALLESVSREKIHELAQLCLSFLRLLQVFNQFYDRRNPEEPTPFLWDKASEKFQTMMVKLWTFFYLLFRQLTNGLDENLPQTTISTLNDILSIVHEDLGHRKCCSFANGIFVDLTLDEIVRMKWNESEADLLQNIRCRFGIQLANEHYHPTDHGATPRALKRSDGLAFQDFIMNMVYRKPSSVHNIRADLRAVMDQLYEAIGDPDKNIASTSHNMTVLGRFTVAPVTWNYIENSLRGESFLPFMTSTDPVLSASTGGFYCVQGMLALAKFRQGKKAAAPGRTEDLQAAVKFFTNDILCCPTRYESWFGIANAYEMLTEDDLMWSAEKLDVPNSIVNINQRKALLCGLNSVNLMLQQRDEKPANPQLRTFFNAVMKESQWLFLSKLFYSATANPLHGASFRQADNKIFCGMKGLYMRQNLSLPRRKQCYQVVRACLTISINSKDQPPDWYSYYLRSKVYSKLKKTTQAILGDIQKSIAVAPDKINGDILLEPHYKLVAYLYKAVKRGKLTAAEAYKELKKTPHFVEYLGEDADMESGDDSDSDSEVGSDSETESTKEGPIASATEPAADTAPPVVPSEGTSGSPISIDDATPVPGPVTAVTAIAAPPTVAAKPEEKKKPLTRMEIKFYKSCIETLRRMKVLDKRKWHHRPPFLIARIHKEVFEDYRSAKEEMVPFFNLKNQSKAPVHIWKPDFERAGKHFQYVFDYLMFFIVLLDKTDDTDAITTIGKKLRRFNNGMVNHFEVWEFTCLTSNVLMKRVTRIPEKLPDAIIPSLQFDNFDRIAQGLQDKITKSKEPASYLLSLLYYASEFRRLNNGFGSTGVVDDTVVCLYLKMLIEYAGTSLLADNKSRSSTPVVLDGAKFEFQPGSAQPPALPAPATTATTAGKKEDGKKEKTRVTRKDILLRATNLIKACSNKVGENIKLVTTKGPPAVASSNGSSSNSGTRSNSEEKEKEPTEEPEKSTQDSDVEMADANQGNTETTVEPEAEGEADKSAEEDKSDKSAEEEKTDKFAEEEKSASAEPAGKNTPKSKSTGSNGVITIDEEYSAPE.

Disordered stretches follow at residues 350-439 (IGEV…LEKQ), 1402-1466 (GEDA…ATPV), 1738-1769 (PGSAQPPALPAPATTATTAGKKEDGKKEKTRV), and 1799-1921 (KGPP…SAPE). 2 stretches are compositionally biased toward basic and acidic residues: residues 353 to 376 (VENKSSTEENKKQESPENGDKKEA) and 391 to 400 (TTVKTEDRDS). Over residues 413-422 (GTTSSSQPPS) the composition is skewed to polar residues. Positions 428 to 439 (RGADEPAELEKQ) are enriched in basic and acidic residues. The span at 1402-1425 (GEDADMESGDDSDSDSEVGSDSET) shows a compositional bias: acidic residues. Residues 1757–1769 (GKKEDGKKEKTRV) show a composition bias toward basic and acidic residues. A compositionally biased stretch (low complexity) spans 1806-1818 (SSNGSSSNSGTRS). Composition is skewed to basic and acidic residues over residues 1819-1836 (NSEEKEKEPTEEPEKSTQ) and 1861-1890 (EADKSAEEDKSDKSAEEEKTDKFAEEEKSA). Over residues 1899 to 1910 (TPKSKSTGSNGV) the composition is skewed to polar residues.

This sequence belongs to the HIR3 family.

The protein localises to the nucleus. Its function is as follows. Has a role in a nucleosome assembly pathway that is required for the integrity of heterochromatin and proper chromosome segregation. This is Histone transcription regulator 3 homolog (HIR3) from Yarrowia lipolytica (strain CLIB 122 / E 150) (Yeast).